We begin with the raw amino-acid sequence, 646 residues long: Glutamine--tRNA ligase protein virJ (646 aa).

The disordered stretch occupies residues 25–65; it reads NELKKRIQKRARKAAAAANRSNAQQEKGNKPAANKPAAKPE. Residues 38–61 are compositionally biased toward low complexity; sequence AAAAANRSNAQQEKGNKPAANKPA. A 'HIGH' region motif is present at residues 98 to 108; sequence PEPNGYLHLGH. ATP contacts are provided by residues 99–101 and 105–111; these read EPN and HLGHAKA. 2 residues coordinate L-glutamine: Asp-147 and Tyr-296. Residues Thr-315, 344–345, and 352–354 contribute to the ATP site; these read RL and MSK. The short motif at 351-355 is the 'KMSKS' region element; that stretch reads IMSKR.

The protein belongs to the class-I aminoacyl-tRNA synthetase family.

It catalyses the reaction tRNA(Gln) + L-glutamine + ATP = L-glutaminyl-tRNA(Gln) + AMP + diphosphate. In terms of biological role, glutamine--tRNA ligase; part of the gene cluster that mediates the biosynthesis of virensols and trichoxide, fungal natural products that contain or are derived from a salicylaldehyde core. VirJ does not seem to play any role in virensols and trichoxide biosynthesis. The chain is Glutamine--tRNA ligase protein virJ from Hypocrea virens (strain Gv29-8 / FGSC 10586) (Gliocladium virens).